Reading from the N-terminus, the 386-residue chain is Patatin-10 (386 aa).

An N-terminal signal peptide occupies residues 1–23; that stretch reads MATTKSFLILFFMILATTSSTCA. One can recognise a PNPLA domain in the interval 32-229; it reads LSIDGGGIKG…TVGDPALLSL (198 aa). Residues 36 to 41 carry the GXGXXG motif; the sequence is GGGIKG. The short motif at 75–79 is the GXSXG element; sequence GTSTG. Serine 77 (nucleophile) is an active-site residue. The N-linked (GlcNAc...) asparagine glycan is linked to asparagine 115. The active-site Proton acceptor is aspartate 215. Residues 215 to 217 carry the DGA/G motif; it reads DGG. Residues 321–384 adopt a coiled-coil conformation; sequence ENALTGTTTE…NRKKLRANKA (64 aa).

Belongs to the patatin family. Tuber.

The protein localises to the vacuole. Probable lipolytic acyl hydrolase (LAH), an activity which is thought to be involved in the response of tubers to pathogens. The sequence is that of Patatin-10 from Solanum tuberosum (Potato).